A 158-amino-acid polypeptide reads, in one-letter code: Transcription elongation factor GreA (158 aa).

Residues 47–68 (AEYDAAKEAQGLLELKIKKMEE) adopt a coiled-coil conformation.

It belongs to the GreA/GreB family.

Necessary for efficient RNA polymerase transcription elongation past template-encoded arresting sites. The arresting sites in DNA have the property of trapping a certain fraction of elongating RNA polymerases that pass through, resulting in locked ternary complexes. Cleavage of the nascent transcript by cleavage factors such as GreA or GreB allows the resumption of elongation from the new 3'terminus. GreA releases sequences of 2 to 3 nucleotides. The polypeptide is Transcription elongation factor GreA (Flavobacterium psychrophilum (strain ATCC 49511 / DSM 21280 / CIP 103535 / JIP02/86)).